We begin with the raw amino-acid sequence, 528 residues long: Phosphoenolpyruvate carboxykinase (ATP) (528 aa).

Substrate-binding residues include R56, Y192, and K198. ATP contacts are provided by residues K198, H217, and 233–241 (GLSGTGKTT). Mn(2+)-binding residues include K198 and H217. D254 serves as a coordination point for Mn(2+). ATP is bound by residues E282, R319, and T444. Residue R319 participates in substrate binding.

This sequence belongs to the phosphoenolpyruvate carboxykinase (ATP) family. Mn(2+) is required as a cofactor.

The protein resides in the cytoplasm. It carries out the reaction oxaloacetate + ATP = phosphoenolpyruvate + ADP + CO2. Its pathway is carbohydrate biosynthesis; gluconeogenesis. In terms of biological role, involved in the gluconeogenesis. Catalyzes the conversion of oxaloacetate (OAA) to phosphoenolpyruvate (PEP) through direct phosphoryl transfer between the nucleoside triphosphate and OAA. The sequence is that of Phosphoenolpyruvate carboxykinase (ATP) from Lysinibacillus sphaericus (strain C3-41).